Reading from the N-terminus, the 435-residue chain is Membrane-bound ghrelin O-acyltransferase MBOAT4 (435 aa).

The Lumenal portion of the chain corresponds to 1-5 (MDWLQ). A helical membrane pass occupies residues 6–26 (LFFLHPLSFYQGAAFPFALLF). Residues 27–40 (NYLCILDTFSTRAR) are Cytoplasmic-facing. Residues 41–56 (YLFLLAGGGVLAFAAM) traverse the membrane as a helical segment. Residues 57–59 (GPY) are Lumenal-facing. A helical membrane pass occupies residues 60-76 (SLLIFIPALCAVALVSF). The Cytoplasmic portion of the chain corresponds to 77–82 (LSPQEV). Residues 83–101 (HRLTFFFQMGWQTLCHLGL) traverse the membrane as a helical segment. Residues 102–120 (HYTEYYLGEPPPVRFYITL) lie on the Lumenal side of the membrane. Residues 121–136 (SSLMLLTQRVTSLSLD) traverse the membrane as a helical segment. At 137 to 206 (ICEGKVEAPR…YPSISFRALT (70 aa)) the chain is on the cytoplasmic side. A helical transmembrane segment spans residues 207-227 (WRGLQILGLECLKVALRSAVS). Residues 228–240 (AGAGLDDCQRLEC) are Lumenal-facing. The helical transmembrane segment at 241-261 (IYLMWSTAWLFKLTYYSHWIL) threads the bilayer. Topologically, residues 262-324 (DDSLLHAAGF…RRLVFRKSRR (63 aa)) are cytoplasmic. Residues Asn307 and His338 contribute to the active site. A helical membrane pass occupies residues 325-338 (WPLLQTFAFSAWWH). Residues 339–340 (GL) lie on the Lumenal side of the membrane. Residues 341–357 (HPGQVFGFLCWSVMVKA) form a helical membrane-spanning segment. At 358–376 (DYLIHTFANVCIRSWPLRL) the chain is on the cytoplasmic side. The chain crosses the membrane as a helical span at residues 377–397 (LYRALTWAHTQLIIAYIMLAV). The Lumenal portion of the chain corresponds to 398 to 407 (EGRSLSSLCQ). A helical membrane pass occupies residues 408-428 (LCCSYNSLFPVMYGLLLFLLA). Residues 429 to 435 (ERKDKRN) are Cytoplasmic-facing.

This sequence belongs to the membrane-bound acyltransferase family. Monomer. In terms of processing, not glycosylated. In terms of tissue distribution, highly expressed in stomach and pancreas. Lower expression in small intestine and colon. Very low expression in testis.

It is found in the endoplasmic reticulum membrane. The enzyme catalyses octanoyl-CoA + L-seryl-[protein] = O-octanoyl-L-seryl-[protein] + CoA. It carries out the reaction hexanoyl-CoA + L-seryl-[protein] = O-hexanoyl-L-seryl-[protein] + CoA. The catalysed reaction is decanoyl-CoA + L-seryl-[protein] = O-decanoyl-L-seryl-[protein] + CoA. It catalyses the reaction L-seryl-[protein] + acetyl-CoA = O-acetyl-L-seryl-[protein] + CoA. The enzyme catalyses L-seryl-[protein] + butanoyl-CoA = O-butanoyl-L-seryl-[protein] + CoA. It carries out the reaction pentanoyl-CoA + L-seryl-[protein] = O-pentanoyl-L-seryl-[protein] + CoA. The catalysed reaction is heptanoyl-CoA + L-seryl-[protein] = O-heptanoyl-L-seryl-[protein] + CoA. It catalyses the reaction nonanoyl-CoA + L-seryl-[protein] = O-nonanoyl-L-seryl-[protein] + CoA. The enzyme catalyses L-seryl-[protein] + dodecanoyl-CoA = O-dodecanoyl-L-seryl-[protein] + CoA. It carries out the reaction L-seryl-[protein] + tetradecanoyl-CoA = O-tetradecanoyl-L-seryl-[protein] + CoA. The catalysed reaction is a fatty acyl-CoA + L-seryl-[protein] = O-fatty acyl-L-seryl-[protein] + CoA. Its activity is regulated as follows. Inhibited by 1-[2-cyano-3,12-dioxooleana-1,9(11)- dien-28-oyl]ethylamide (CDDO-EA) with an IC(50) of 60 uM. Inhibited by Fe3+ and Cu2+ and the O-acyltransferase activity is completely blocked over 5 mM Fe3+ and 0.5 mM Cu2+. Its function is as follows. Catalyzes ghrelin acylation at 'Ser-3' using preferentially octanoyl-CoA, hexanoyl-CoA and decanoyl-CoA as acyl-CoA donors leading to ghrelin activity. In vitro also uses acyl-CoA donors of different lengths from short-chain (C2) to long-chain fatty acids (C16) knowing that acyl-CoA donors from butanoyl-CoA (C4) to dodecanoyl-CoA (C12) are more efficient compared to longer acyl-CoA donors, such as myristoyl-CoA (C14) and palmitoyl-CoA (C16) that are not efficient. Functionally, inactive octanoyltransferase activity. The sequence is that of Membrane-bound ghrelin O-acyltransferase MBOAT4 from Mus musculus (Mouse).